The primary structure comprises 703 residues: Calcium-responsive transcription factor (703 aa).

Disordered stretches follow at residues 1 to 61 (MEQS…QNIP), 130 to 150 (GPLV…SDRN), and 517 to 539 (GNSQ…SLSP). The span at 9 to 22 (KVNHNDSEESKTDS) shows a compositional bias: basic and acidic residues. The segment covering 23 to 34 (QHLTYMDSSEPS) has biased composition (polar residues).

The protein resides in the nucleus. Acts as a transcriptional activator that mediates the calcium- and neuron-selective induction of BDNF exon III transcription. Binds to the consensus calcium-response element CaRE1 5'-CTATTTCGAG-3' sequence. The protein is Calcium-responsive transcription factor (CARF) of Bos taurus (Bovine).